Consider the following 82-residue polypeptide: Photosystem I iron-sulfur center (82 aa).

4Fe-4S ferredoxin-type domains are found at residues 2–31 (AHTVKIYDTCIGCTQCVRACPTDVLEMVPW) and 40–69 (IAAAPRTEDCVGCKRCETACPTDFLSIRVY). [4Fe-4S] cluster contacts are provided by Cys11, Cys14, Cys17, Cys21, Cys49, Cys52, Cys55, and Cys59.

As to quaternary structure, the cyanobacterial PSI reaction center is composed of one copy each of PsaA,B,C,D,E,F,I,J,K,L,M and X, and forms trimeric complexes. It depends on [4Fe-4S] cluster as a cofactor.

The protein resides in the cellular thylakoid membrane. The catalysed reaction is reduced [plastocyanin] + hnu + oxidized [2Fe-2S]-[ferredoxin] = oxidized [plastocyanin] + reduced [2Fe-2S]-[ferredoxin]. Functionally, apoprotein for the two 4Fe-4S centers FA and FB of photosystem I (PSI); essential for photochemical activity. FB is the terminal electron acceptor of PSI, donating electrons to ferredoxin. The C-terminus interacts with PsaA/B/D and helps assemble the protein into the PSI complex. Required for binding of PsaD and PsaE to PSI. PSI is a plastocyanin/cytochrome c6-ferredoxin oxidoreductase, converting photonic excitation into a charge separation, which transfers an electron from the donor P700 chlorophyll pair to the spectroscopically characterized acceptors A0, A1, FX, FA and FB in turn. This Synechococcus sp. (strain JA-3-3Ab) (Cyanobacteria bacterium Yellowstone A-Prime) protein is Photosystem I iron-sulfur center.